Here is a 575-residue protein sequence, read N- to C-terminus: Arginine--tRNA ligase (575 aa).

The short motif at 131–141 is the 'HIGH' region element; that stretch reads ANPTGPLHVGH.

Belongs to the class-I aminoacyl-tRNA synthetase family. As to quaternary structure, monomer.

Its subcellular location is the cytoplasm. It carries out the reaction tRNA(Arg) + L-arginine + ATP = L-arginyl-tRNA(Arg) + AMP + diphosphate. This Jannaschia sp. (strain CCS1) protein is Arginine--tRNA ligase.